The sequence spans 479 residues: tRNA-2-methylthio-N(6)-dimethylallyladenosine synthase (479 aa).

The 118-residue stretch at 3-120 (KKLYIKTWGC…LPEMVNQVSE (118 aa)) folds into the MTTase N-terminal domain. [4Fe-4S] cluster is bound by residues cysteine 12, cysteine 49, cysteine 83, cysteine 157, cysteine 161, and cysteine 164. A Radical SAM core domain is found at 143–375 (KADGASAFVS…QQRLNQQSMA (233 aa)). Residues 378–441 (RRMLETEQRI…PNSLRGELIR (64 aa)) enclose the TRAM domain.

It belongs to the methylthiotransferase family. MiaB subfamily. In terms of assembly, monomer. [4Fe-4S] cluster serves as cofactor.

The protein localises to the cytoplasm. It carries out the reaction N(6)-dimethylallyladenosine(37) in tRNA + (sulfur carrier)-SH + AH2 + 2 S-adenosyl-L-methionine = 2-methylsulfanyl-N(6)-dimethylallyladenosine(37) in tRNA + (sulfur carrier)-H + 5'-deoxyadenosine + L-methionine + A + S-adenosyl-L-homocysteine + 2 H(+). Functionally, catalyzes the methylthiolation of N6-(dimethylallyl)adenosine (i(6)A), leading to the formation of 2-methylthio-N6-(dimethylallyl)adenosine (ms(2)i(6)A) at position 37 in tRNAs that read codons beginning with uridine. This chain is tRNA-2-methylthio-N(6)-dimethylallyladenosine synthase, found in Idiomarina loihiensis (strain ATCC BAA-735 / DSM 15497 / L2-TR).